Reading from the N-terminus, the 316-residue chain is Glucan endo-1,3-beta-glucosidase GV (316 aa).

The active-site Proton donor is the glutamate 99. Residue glutamate 239 is the Nucleophile of the active site.

The protein belongs to the glycosyl hydrolase 17 family.

Its subcellular location is the cytoplasm. It carries out the reaction Hydrolysis of (1-&gt;3)-beta-D-glucosidic linkages in (1-&gt;3)-beta-D-glucans.. May provide a degree of protection against microbial invasion of germinated barley grain through its ability to degrade fungal cell wall polysaccharides. This is Glucan endo-1,3-beta-glucosidase GV from Hordeum vulgare (Barley).